The sequence spans 318 residues: NADH-ubiquinone oxidoreductase chain 1 (318 aa).

The next 8 helical transmembrane spans lie at 2-22, 70-90, 100-120, 147-167, 171-191, 223-243, 253-273, and 294-314; these read FFINIISLIIPILLAVAFLTL, MFILAPILALSLALTMWIPLP, LGVLFMLAMSSLAVYSILWSG, AIILLSVLLMNGSFTLSTLII, HMWLIFPAWPLAMMWFISTLA, FFLAEYANIIMMNILTTILFF, ELYSINFTMKTLLLTICFLWI, and LPLTLALCMWHVALPIITASI.

It belongs to the complex I subunit 1 family. Core subunit of respiratory chain NADH dehydrogenase (Complex I) which is composed of 45 different subunits.

Its subcellular location is the mitochondrion inner membrane. It catalyses the reaction a ubiquinone + NADH + 5 H(+)(in) = a ubiquinol + NAD(+) + 4 H(+)(out). Functionally, core subunit of the mitochondrial membrane respiratory chain NADH dehydrogenase (Complex I) which catalyzes electron transfer from NADH through the respiratory chain, using ubiquinone as an electron acceptor. Essential for the catalytic activity and assembly of complex I. This Canis lupus familiaris (Dog) protein is NADH-ubiquinone oxidoreductase chain 1 (MT-ND1).